We begin with the raw amino-acid sequence, 129 residues long: Calcitonin gene-related peptide 2 (129 aa).

Positions 1–25 (MGFGKPSSFLAFSILVLCQAGSLQA) are cleaved as a signal peptide. Residues 26–81 (QPLRSSLESLPDPAALSEKEGRLLLAALVKAYVQRKTNELEQEQEQEMEGSSLTAQ) constitute a propeptide that is removed on maturation. An intrachain disulfide couples cysteine 85 to cysteine 90. At phenylalanine 120 the chain carries Phenylalanine amide. Positions 126–129 (DLQA) are excised as a propeptide.

This sequence belongs to the calcitonin family.

The protein resides in the secreted. Its function is as follows. CALCB/CGRP2 is a peptide hormone that induces vasodilation mediated by the CALCRL-RAMP1 receptor complex. Dilates a variety of vessels including the coronary, cerebral and systemic vasculature. Its abundance in the CNS also points toward a neurotransmitter or neuromodulator role. The polypeptide is Calcitonin gene-related peptide 2 (CALCB) (Equus caballus (Horse)).